Consider the following 879-residue polypeptide: Phosphoinositide 3-kinase regulatory subunit 5 (879 aa).

A heterodimerization region spans residues 23-100 (SGSTDISSNW…APYIPETSDL (78 aa)). Disordered stretches follow at residues 314–345 (SLED…PKQD) and 570–590 (SSST…PSPS). Acidic residues predominate over residues 315–336 (LEDDVTEEDEEVDFEEVDDKDE). Residues 570 to 589 (SSSTNAPMTNAESPLKSPSP) show a composition bias toward polar residues. The tract at residues 651–751 (PILADMVLYY…WSNGEKVCTS (101 aa)) is interaction with beta-gamma G protein dimers.

In terms of assembly, heterodimer. Interacts with a catalytic subunit and with beta-gamma G protein dimers.

Its subcellular location is the nucleus. It localises to the cytoplasm. It is found in the cell membrane. Its activity is regulated as follows. Greatly activated by G gamma proteins. In terms of biological role, regulatory subunit of the PI3K gamma complex. Required for recruitment of the catalytic subunit to the plasma membrane via interaction with beta-gamma G protein dimers. Required for G protein-mediated activation of PIK3CG. The chain is Phosphoinositide 3-kinase regulatory subunit 5 (pik3r5) from Xenopus laevis (African clawed frog).